A 783-amino-acid chain; its full sequence is Transcription factor E4F1 (783 aa).

The required for ubiquitin ligase activity stretch occupies residues 40–84; that stretch reads GFLGLPAPFSEEDEDDVHRCGRCQVEFTALEDFVQHKIQKTCHRA. Position 49 is a phosphoserine (S49). A mediates dimerization, DNA-binding, transcription repression of CCNA2 and interaction with HMGA2 region spans residues 185–264; that stretch reads LLVNKEGRYV…GKSFRESGAL (80 aa). 2 consecutive C2H2-type zinc fingers follow at residues 193–215 and 221–243; these read YVCM…MVTH and HECK…HRRH. Residues 249–273 form a C2H2-type 3; degenerate zinc finger; that stretch reads YKCAKCGKSFRESGALTRHLKSLTP. Positions 368–565 are mediates interaction with CDKN2A; it reads NLLHQAMQNS…REKGSLVRHV (198 aa). Residues 386 to 407 are disordered; the sequence is GEESALEPAPPSGSSPQCLGDG. 5 C2H2-type zinc fingers span residues 434–456, 462–484, 490–512, 518–540, and 546–568; these read HPCP…KRGH, FTCT…QEVH, FRCG…RRVH, FPCP…FRTH, and HVCQ…VRHH. Residues 434 to 598 are interaction with BMI1; the sequence is HPCPQCSETF…LNRHLRTKGG (165 aa). A mediates interaction with TP53 region spans residues 520–579; that stretch reads CPQCGKRYKTKNAQQVHFRTHLEEKPHVCQFCSRGFREKGSLVRHVRHHTGEKPFKCYKC. The segment at 574–596 adopts a C2H2-type 9; degenerate zinc-finger fold; it reads FKCYKCGRGFAEHGTLNRHLRTK. A mediates interaction with RASSF1 region spans residues 574–596; the sequence is FKCYKCGRGFAEHGTLNRHLRTK.

As to quaternary structure, homodimer; binds DNA as a dimer. Forms a complex with CDKN2A and TP53. Interacts with HDAC1, HMGA2 and RASSF1. Interactions with TP53, RB1, ANP32A and probably BMI1 and FHL2 regulate E4F1 activity. In terms of processing, phosphorylated; phosphorylation is cell cycle-dependent and regulates DNA-binding activity and function. Post-translationally, may be sumoylated by UBE2I upon interaction with CDKN2A. In terms of tissue distribution, ubiquitously expressed.

It is found in the nucleus. It localises to the nucleoplasm. The protein resides in the cytoplasm. The enzyme catalyses S-ubiquitinyl-[E2 ubiquitin-conjugating enzyme]-L-cysteine + [acceptor protein]-L-lysine = [E2 ubiquitin-conjugating enzyme]-L-cysteine + N(6)-ubiquitinyl-[acceptor protein]-L-lysine.. It functions in the pathway protein modification; protein ubiquitination. In terms of biological role, may function as a transcriptional repressor. May also function as a ubiquitin ligase mediating ubiquitination of chromatin-associated TP53. Functions in cell survival and proliferation through control of the cell cycle. Functions in the p53 and pRB tumor suppressor pathways and regulates the cyclin CCNA2 transcription. The sequence is that of Transcription factor E4F1 (E4f1) from Mus musculus (Mouse).